Here is a 242-residue protein sequence, read N- to C-terminus: Protein HTATIP2 (242 aa).

The residue at position 2 (A2) is an N-acetylalanine. The required for interaction with elongation factor EEF1A1 stretch occupies residues 2 to 25 (AETEALSKLREDFRMQNKSVFILG). 12 residues coordinate NADPH: S27, G28, E29, T30, R52, R53, L92, G93, Y143, K147, L170, and R178. Catalysis depends on Y143, which acts as the Proton acceptor. K147 is a catalytic residue.

Monomer. Forms homodimers during oxidative stress. Interacts (via N-terminus) with elongation factor EEF1A1 (via middle-region); the interaction is direct and competes with EEF1A1 binding to guanyl-nucleotide exchange factor EEF1B2, thereby inhibiting GDP for GTP exchange and reactivation of EEF1A1. Interacts with nuclear transport receptors XPO4, IPO5/RANBP5, IPO7, IPO9 and KPNB1 as well as GCN1L1/GCN1 and LRPPRC probably through their HEAT repeats. Binds NCOA5/CIA.

Its subcellular location is the cytoplasm. In terms of biological role, represses translation by preventing reactivation of elongation factor eEF1A. May also inhibit nuclear import by competing with nuclear import substrates for binding to a subset of nuclear transport receptors. Has additionally been proposed to act as a redox sensor involved in cellular oxidative stress surveillance. The chain is Protein HTATIP2 (HTATIP2) from Pongo pygmaeus (Bornean orangutan).